A 232-amino-acid polypeptide reads, in one-letter code: 5'-methylthioadenosine/S-adenosylhomocysteine nucleosidase (232 aa).

Glutamate 12 acts as the Proton acceptor in catalysis. Substrate contacts are provided by residues glycine 78, isoleucine 152, and 173–174 (ME). Aspartate 197 acts as the Proton donor in catalysis.

Belongs to the PNP/UDP phosphorylase family. MtnN subfamily. Homodimer.

The catalysed reaction is S-adenosyl-L-homocysteine + H2O = S-(5-deoxy-D-ribos-5-yl)-L-homocysteine + adenine. The enzyme catalyses S-methyl-5'-thioadenosine + H2O = 5-(methylsulfanyl)-D-ribose + adenine. It catalyses the reaction 5'-deoxyadenosine + H2O = 5-deoxy-D-ribose + adenine. It participates in amino-acid biosynthesis; L-methionine biosynthesis via salvage pathway; S-methyl-5-thio-alpha-D-ribose 1-phosphate from S-methyl-5'-thioadenosine (hydrolase route): step 1/2. Catalyzes the irreversible cleavage of the glycosidic bond in both 5'-methylthioadenosine (MTA) and S-adenosylhomocysteine (SAH/AdoHcy) to adenine and the corresponding thioribose, 5'-methylthioribose and S-ribosylhomocysteine, respectively. Also cleaves 5'-deoxyadenosine, a toxic by-product of radical S-adenosylmethionine (SAM) enzymes, into 5-deoxyribose and adenine. Thus, is required for in vivo function of the radical SAM enzymes biotin synthase and lipoic acid synthase, that are inhibited by 5'-deoxyadenosine accumulation. This is 5'-methylthioadenosine/S-adenosylhomocysteine nucleosidase from Klebsiella pneumoniae (strain 342).